A 555-amino-acid polypeptide reads, in one-letter code: Carboxylic ester hydrolase (555 aa).

The first 19 residues, 1–19 (MELSVIALLLLGFVNFSWQ), serve as a signal peptide directing secretion. An intrachain disulfide couples C86 to C107. 2 N-linked (GlcNAc...) asparagine glycosylation sites follow: N120 and N144. Residue S211 is the Acyl-ester intermediate of the active site. The cysteines at positions 263 and 274 are disulfide-linked. The active-site Charge relay system is E336. N369 and N397 each carry an N-linked (GlcNAc...) asparagine glycan. The active-site Charge relay system is H459. 2 N-linked (GlcNAc...) asparagine glycosylation sites follow: N473 and N533.

Belongs to the type-B carboxylesterase/lipase family. In terms of processing, N-glycosylated. As to expression, expressed in several tissues, including epidermis (at protein level), fat body (at protein level), gut (at protein level), muscle (at protein level), and venom gland (at protein level).

Its subcellular location is the secreted. The catalysed reaction is a carboxylic ester + H2O = an alcohol + a carboxylate + H(+). Lipolytic agent that may be involved in distributing the venom via degradation of blood triglycerides. The recombinant protein degrades triglycerides and exhibits high lipolytic activity toward long-chain triglycerides (tested on tributyrin, trioctanoin and triolein). Does not affect mammalian cells. The protein is Carboxylic ester hydrolase (vCaE) of Bombus ignitus (Bumblebee).